The chain runs to 37 residues: Potassium channel toxin alpha-KTx 2.19 (37 aa).

Disulfide bonds link Cys-7–Cys-28, Cys-13–Cys-33, and Cys-17–Cys-35.

As to expression, expressed by the venom gland.

The protein resides in the secreted. Functionally, inhibitor of voltage-gated potassium channels. This chain is Potassium channel toxin alpha-KTx 2.19, found in Rhopalurus junceus (Caribbean blue scorpion).